The primary structure comprises 630 residues: Chaperone protein HtpG (630 aa).

An a; substrate-binding region spans residues 1 to 339 (MSHTETHAFQ…SNDLPLNVSR (339 aa)). The segment at 340-556 (EILQSNRVVD…EGDISAHMAR (217 aa)) is b. A c region spans residues 557–630 (MMEQMGQAMP…RMNALLSEVI (74 aa)).

This sequence belongs to the heat shock protein 90 family. As to quaternary structure, homodimer.

It localises to the cytoplasm. In terms of biological role, molecular chaperone. Has ATPase activity. This is Chaperone protein HtpG from Hydrogenovibrio crunogenus (strain DSM 25203 / XCL-2) (Thiomicrospira crunogena).